Here is a 181-residue protein sequence, read N- to C-terminus: Inorganic pyrophosphatase (181 aa).

Positions 16, 30, and 42 each coordinate substrate. Positions 52, 57, and 89 each coordinate Mg(2+). Position 126 (Tyr-126) interacts with substrate.

It belongs to the PPase family. In terms of assembly, homohexamer. Requires Mg(2+) as cofactor.

It is found in the cytoplasm. It carries out the reaction diphosphate + H2O = 2 phosphate + H(+). Its function is as follows. Catalyzes the hydrolysis of inorganic pyrophosphate (PPi) forming two phosphate ions. The sequence is that of Inorganic pyrophosphatase from Ureaplasma parvum serovar 3 (strain ATCC 700970).